An 809-amino-acid chain; its full sequence is Phenylalanine--tRNA ligase beta subunit (809 aa).

A tRNA-binding domain is found at 39–152 (KDKWPNVYVG…ADALVGMLAS (114 aa)). The 89-residue stretch at 404-492 (KERNGIVLSL…RIAGYHTIPC (89 aa)) folds into the B5 domain. Positions 470, 476, 479, and 480 each coordinate Mg(2+). An FDX-ACB domain is found at 717-808 (NRFPAVERDL…LNTETGAVLR (92 aa)).

Belongs to the phenylalanyl-tRNA synthetase beta subunit family. Type 1 subfamily. As to quaternary structure, tetramer of two alpha and two beta subunits. The cofactor is Mg(2+).

It localises to the cytoplasm. The enzyme catalyses tRNA(Phe) + L-phenylalanine + ATP = L-phenylalanyl-tRNA(Phe) + AMP + diphosphate + H(+). The sequence is that of Phenylalanine--tRNA ligase beta subunit from Dehalococcoides mccartyi (strain CBDB1).